Reading from the N-terminus, the 139-residue chain is MKPAARRRARECAVQALYSWQLSQNDIADVEYQFLAEQDVKDVDVLYFRELLAGVATNTAYLDGLMKPYLSRLLEELGQVEKAVLRIALYELSKRSDVPYKVAINEAIELAKSFGAEDSHKFVNGVLDKAAPVIRPNKK.

Belongs to the NusB family.

Involved in transcription antitermination. Required for transcription of ribosomal RNA (rRNA) genes. Binds specifically to the boxA antiterminator sequence of the ribosomal RNA (rrn) operons. This chain is Transcription antitermination protein NusB, found in Escherichia coli (strain K12 / MC4100 / BW2952).